An 88-amino-acid chain; its full sequence is U1-hexatoxin-Iw1c (88 aa).

The signal sequence occupies residues 1 to 17; sequence LKFVVLICLVIMASTSA. Residue Gln18 is modified to Pyrrolidone carboxylic acid. 5 disulfide bridges follow: Cys20–Cys31, Cys25–Cys39, Cys30–Cys65, Cys49–Cys73, and Cys67–Cys80. A propeptide spanning residues 86–88 is cleaved from the precursor; the sequence is RSE.

The protein belongs to the MIT-like AcTx family. As to expression, expressed by the venom gland.

The protein resides in the secreted. This Illawarra wisharti (Illawarra funnel-web spider) protein is U1-hexatoxin-Iw1c.